The following is a 75-amino-acid chain: Small ribosomal subunit protein bS16 (75 aa).

This sequence belongs to the bacterial ribosomal protein bS16 family.

This is Small ribosomal subunit protein bS16 from Nitratiruptor sp. (strain SB155-2).